Here is a 495-residue protein sequence, read N- to C-terminus: L-arabinose isomerase (495 aa).

Positions 305, 332, 349, and 448 each coordinate Mn(2+).

This sequence belongs to the arabinose isomerase family. Requires Mn(2+) as cofactor.

The enzyme catalyses beta-L-arabinopyranose = L-ribulose. Its pathway is carbohydrate degradation; L-arabinose degradation via L-ribulose; D-xylulose 5-phosphate from L-arabinose (bacterial route): step 1/3. Functionally, catalyzes the conversion of L-arabinose to L-ribulose. The polypeptide is L-arabinose isomerase (Mannheimia succiniciproducens (strain KCTC 0769BP / MBEL55E)).